Reading from the N-terminus, the 197-residue chain is 3-isopropylmalate dehydratase small subunit (197 aa).

The protein belongs to the LeuD family. LeuD type 1 subfamily. As to quaternary structure, heterodimer of LeuC and LeuD.

The enzyme catalyses (2R,3S)-3-isopropylmalate = (2S)-2-isopropylmalate. Its pathway is amino-acid biosynthesis; L-leucine biosynthesis; L-leucine from 3-methyl-2-oxobutanoate: step 2/4. In terms of biological role, catalyzes the isomerization between 2-isopropylmalate and 3-isopropylmalate, via the formation of 2-isopropylmaleate. This chain is 3-isopropylmalate dehydratase small subunit, found in Geobacillus sp. (strain WCH70).